A 562-amino-acid polypeptide reads, in one-letter code: Sperm-tail PG-rich repeat-containing protein 2 (562 aa).

3 STPGR repeats span residues G21 to L31, S60 to N73, and P96 to P118. Disordered regions lie at residues K114–I136 and S192–Q215. The span at P127–I136 shows a compositional bias: low complexity. A compositionally biased stretch (basic and acidic residues) spans G193 to D202. 6 STPGR repeats span residues P204–E227, P253–H271, T336–A350, T385–F409, T425–L462, and T478–S492. Residues S543–A562 form a disordered region. Basic residues predominate over residues R551 to A562.

This Danio rerio (Zebrafish) protein is Sperm-tail PG-rich repeat-containing protein 2 (stpg2).